Here is a 175-residue protein sequence, read N- to C-terminus: Alpha-crystallin B chain (175 aa).

At methionine 1 the chain carries N-acetylmethionine. Residues serine 19, serine 45, and serine 59 each carry the phosphoserine modification. The 109-residue stretch at 56–164 folds into the sHSP domain; it reads RAPSWIDTGL…PERTIPITRE (109 aa). Histidine 83 is a binding site for Zn(2+). Lysine 92 carries the N6-acetyllysine modification. Positions 104, 106, 111, and 119 each coordinate Zn(2+). Positions 142 to 175 are disordered; sequence VLTVNGPRKQASGPERTIPITREEKPAVTAAPKK. N6-acetyllysine is present on lysine 166. Threonine 170 is a glycosylation site (O-linked (GlcNAc) threonine).

This sequence belongs to the small heat shock protein (HSP20) family. As to quaternary structure, heteromer composed of three CRYAA and one CRYAB subunits. Aggregates with homologous proteins, including the small heat shock protein HSPB1, to form large heteromeric complexes. Inter-subunit bridging via zinc ions enhances stability, which is crucial as there is no protein turn over in the lens. Interacts with HSPBAP1. Interacts with TTN/titin. Interacts with TMEM109; in the cellular response to DNA damage. Interacts with DES; binds rapidly during early stages of DES filament assembly and a reduced binding seen in the later stages. Interacts with TMED10; the interaction mediates the translocation from the cytoplasm into the ERGIC (endoplasmic reticulum-Golgi intermediate compartment) and thereby secretion. Interacts with ATP6V1A and with MTOR, forming a ternary complex. As to expression, lens as well as other tissues.

The protein localises to the cytoplasm. It is found in the nucleus. Its subcellular location is the secreted. The protein resides in the lysosome. Its function is as follows. May contribute to the transparency and refractive index of the lens. Has chaperone-like activity, preventing aggregation of various proteins under a wide range of stress conditions. In lens epithelial cells, stabilizes the ATP6V1A protein, preventing its degradation by the proteasome. The chain is Alpha-crystallin B chain from Rattus norvegicus (Rat).